The primary structure comprises 622 residues: Low affinity potassium transport system protein Kup (622 aa).

12 helical membrane-spanning segments follow: residues 9–29 (LPALTLAAIGVVYGDIGTSPL), 49–69 (VFGFLSLIFWLLIFTVSIKYI), 101–121 (VLVILGLIGGSFFYGEVVITP), 137–157 (PQLDTWIVPISIIVLTLLFVI), 163–183 (GMVGKLFAPIMLIWFLLLAVL), 213–233 (VSFIALGAVVLSITGVEALYA), 247–267 (WFSVVLPSLVLNYFGQGALLL), 276–296 (PFFLLAPEWALIPMLIIATLA), 337–357 (IYIPFINWLLYVSVVIVIVSF), 363–383 (LAAAYGIAVTGTMVLTSILSA), 395–415 (LFVGLMLVAFLCIDIPLFSAN), and 419–439 (IVSGGWLPLSLGMVMFTVMTT).

This sequence belongs to the HAK/KUP transporter (TC 2.A.72) family.

Its subcellular location is the cell inner membrane. The catalysed reaction is K(+)(in) + H(+)(in) = K(+)(out) + H(+)(out). In terms of biological role, responsible for the low-affinity transport of potassium into the cell. Likely operates as a K(+):H(+) symporter. This is Low affinity potassium transport system protein Kup from Klebsiella pneumoniae subsp. pneumoniae (strain ATCC 700721 / MGH 78578).